Here is a 406-residue protein sequence, read N- to C-terminus: SEC14-like protein 4 (406 aa).

A CRAL-TRIO domain is found at 76–249; sequence PPEVIQLYDS…EFGGTMTDPD (174 aa). The GOLD domain occupies 252–383; sequence PKCLTKINYG…AKKLSYTVEV (132 aa).

Probable hydrophobic ligand-binding protein; may play a role in the transport of hydrophobic ligands like tocopherol, squalene and phospholipids. This Homo sapiens (Human) protein is SEC14-like protein 4 (SEC14L4).